The following is a 153-amino-acid chain: UPF0260 protein YcgN (153 aa).

This sequence belongs to the UPF0260 family.

The chain is UPF0260 protein YcgN from Salmonella paratyphi B (strain ATCC BAA-1250 / SPB7).